A 354-amino-acid polypeptide reads, in one-letter code: UDP-N-acetylglucosamine--N-acetylmuramyl-(pentapeptide) pyrophosphoryl-undecaprenol N-acetylglucosamine transferase (354 aa).

The UDP-N-acetyl-alpha-D-glucosamine site is built by Ser-196 and Gln-288.

The protein belongs to the glycosyltransferase 28 family. MurG subfamily.

Its subcellular location is the cell membrane. The enzyme catalyses Mur2Ac(oyl-L-Ala-gamma-D-Glu-L-Lys-D-Ala-D-Ala)-di-trans,octa-cis-undecaprenyl diphosphate + UDP-N-acetyl-alpha-D-glucosamine = beta-D-GlcNAc-(1-&gt;4)-Mur2Ac(oyl-L-Ala-gamma-D-Glu-L-Lys-D-Ala-D-Ala)-di-trans,octa-cis-undecaprenyl diphosphate + UDP + H(+). It participates in cell wall biogenesis; peptidoglycan biosynthesis. In terms of biological role, cell wall formation. Catalyzes the transfer of a GlcNAc subunit on undecaprenyl-pyrophosphoryl-MurNAc-pentapeptide (lipid intermediate I) to form undecaprenyl-pyrophosphoryl-MurNAc-(pentapeptide)GlcNAc (lipid intermediate II). The polypeptide is UDP-N-acetylglucosamine--N-acetylmuramyl-(pentapeptide) pyrophosphoryl-undecaprenol N-acetylglucosamine transferase (Streptococcus suis (strain 98HAH33)).